Here is a 415-residue protein sequence, read N- to C-terminus: Serine hydroxymethyltransferase (415 aa).

(6S)-5,6,7,8-tetrahydrofolate-binding positions include leucine 117 and 121-123 (GHL). Lysine 226 carries the N6-(pyridoxal phosphate)lysine modification.

Belongs to the SHMT family. Homodimer. It depends on pyridoxal 5'-phosphate as a cofactor.

It is found in the cytoplasm. It catalyses the reaction (6R)-5,10-methylene-5,6,7,8-tetrahydrofolate + glycine + H2O = (6S)-5,6,7,8-tetrahydrofolate + L-serine. Its pathway is one-carbon metabolism; tetrahydrofolate interconversion. It functions in the pathway amino-acid biosynthesis; glycine biosynthesis; glycine from L-serine: step 1/1. Functionally, catalyzes the reversible interconversion of serine and glycine with tetrahydrofolate (THF) serving as the one-carbon carrier. This reaction serves as the major source of one-carbon groups required for the biosynthesis of purines, thymidylate, methionine, and other important biomolecules. Also exhibits THF-independent aldolase activity toward beta-hydroxyamino acids, producing glycine and aldehydes, via a retro-aldol mechanism. The chain is Serine hydroxymethyltransferase from Dehalococcoides mccartyi (strain ATCC BAA-2100 / JCM 16839 / KCTC 5957 / BAV1).